We begin with the raw amino-acid sequence, 711 residues long: DNA ligase (711 aa).

The interval 1 to 29 is disordered; sequence MSEDAIGQQVPAAQEAAAGAEPNSAARER. Residues 12–25 show a composition bias toward low complexity; sequence AAQEAAAGAEPNSA. Residues 54-58, 103-104, and E133 contribute to the NAD(+) site; these read DAAFD and SL. K135 functions as the N6-AMP-lysine intermediate in the catalytic mechanism. Positions 156, 197, 313, and 337 each coordinate NAD(+). Residues C431, C434, C450, and C456 each coordinate Zn(2+). One can recognise a BRCT domain in the interval 620–709; the sequence is QGPRPLEGVT…PEAARAVARV (90 aa).

The protein belongs to the NAD-dependent DNA ligase family. LigA subfamily. Mg(2+) is required as a cofactor. Requires Mn(2+) as cofactor.

The enzyme catalyses NAD(+) + (deoxyribonucleotide)n-3'-hydroxyl + 5'-phospho-(deoxyribonucleotide)m = (deoxyribonucleotide)n+m + AMP + beta-nicotinamide D-nucleotide.. Functionally, DNA ligase that catalyzes the formation of phosphodiester linkages between 5'-phosphoryl and 3'-hydroxyl groups in double-stranded DNA using NAD as a coenzyme and as the energy source for the reaction. It is essential for DNA replication and repair of damaged DNA. The sequence is that of DNA ligase from Salinispora tropica (strain ATCC BAA-916 / DSM 44818 / JCM 13857 / NBRC 105044 / CNB-440).